Here is a 146-residue protein sequence, read N- to C-terminus: Ribonuclease H (146 aa).

The RNase H type-1 domain maps to 1 to 136 (MKHIEIYTDG…CDTLAREAAL (136 aa)). Residues Asp9, Glu47, Asp69, and Asp128 each contribute to the Mg(2+) site.

Belongs to the RNase H family. As to quaternary structure, monomer. It depends on Mg(2+) as a cofactor.

The protein resides in the cytoplasm. It catalyses the reaction Endonucleolytic cleavage to 5'-phosphomonoester.. Its function is as follows. Endonuclease that specifically degrades the RNA of RNA-DNA hybrids. The polypeptide is Ribonuclease H (Campylobacter jejuni subsp. jejuni serotype O:23/36 (strain 81-176)).